Here is a 329-residue protein sequence, read N- to C-terminus: tRNA N6-adenosine threonylcarbamoyltransferase (329 aa).

2 residues coordinate Fe cation: His107 and His111. Residues 129–133, Asp162, Gly175, and Asn268 contribute to the substrate site; that span reads LVSGG. Asp296 serves as a coordination point for Fe cation.

Belongs to the KAE1 / TsaD family. The cofactor is Fe(2+).

The protein localises to the cytoplasm. The enzyme catalyses L-threonylcarbamoyladenylate + adenosine(37) in tRNA = N(6)-L-threonylcarbamoyladenosine(37) in tRNA + AMP + H(+). Required for the formation of a threonylcarbamoyl group on adenosine at position 37 (t(6)A37) in tRNAs that read codons beginning with adenine. Is involved in the transfer of the threonylcarbamoyl moiety of threonylcarbamoyl-AMP (TC-AMP) to the N6 group of A37, together with TsaE and TsaB. TsaD likely plays a direct catalytic role in this reaction. This chain is tRNA N6-adenosine threonylcarbamoyltransferase, found in Nitratiruptor sp. (strain SB155-2).